The primary structure comprises 264 residues: Indole-3-glycerol phosphate synthase (264 aa).

It belongs to the TrpC family.

It catalyses the reaction 1-(2-carboxyphenylamino)-1-deoxy-D-ribulose 5-phosphate + H(+) = (1S,2R)-1-C-(indol-3-yl)glycerol 3-phosphate + CO2 + H2O. Its pathway is amino-acid biosynthesis; L-tryptophan biosynthesis; L-tryptophan from chorismate: step 4/5. This is Indole-3-glycerol phosphate synthase from Xylella fastidiosa (strain 9a5c).